A 465-amino-acid polypeptide reads, in one-letter code: MQLDKKIINHVHCLGIGGIGVSALAEILLKKGCRVTGSDVSPNKNTERLQRLGAEIIFNHDGTAITQADCAVYSSAIGATNPELMAAKQAKIPLLKRGEMLANLMKEYQSIAVAGAHGKTTTSGMLSHAFVEANLDPTFMVGGVLNNSQTPARVGNGHYFIAEADESDASFLFMHPDIAVVTNIDADHLSTYDGDFNRLKQTYIQFLEQTAQDGVVVLCLDDPILREIAPLLSRRVITYGFSSDAQYRVVDYCQQGIQSLFQIHSPQRKAPLTVKLSMPGQHNALNATAVTAIADVVRMNEPALLKSLADFPGVDRRFTIRGEMILPKGNALIIEDYGHHPNEIKATLAAARAAWPERRMVLVFQPHRYSRTRDLMTEFVSVLAETDWLVLLEVYSAGEMPIPGADGMALIKMMSNGMAQKTTFVPLLQNLPETLQKLSQPNDIIILQGAGNIGSIVTALVQTHG.

115–121 (GAHGKTT) is a binding site for ATP.

It belongs to the MurCDEF family.

The protein resides in the cytoplasm. The catalysed reaction is UDP-N-acetyl-alpha-D-muramate + L-alanine + ATP = UDP-N-acetyl-alpha-D-muramoyl-L-alanine + ADP + phosphate + H(+). It functions in the pathway cell wall biogenesis; peptidoglycan biosynthesis. Its function is as follows. Cell wall formation. This chain is UDP-N-acetylmuramate--L-alanine ligase, found in Coxiella burnetii (strain CbuK_Q154) (Coxiella burnetii (strain Q154)).